The primary structure comprises 129 residues: MAKEPARVKRRERKNITSGVAHVNASFNNTMVTITDAQGNTISWSSAGLMGFKGSRKSTPYAAQMAAEDAGRKAAEHGVRTLEVNVSGPGSGRESALRALQAVGMTITTIRDVTPIPHNGCRPPKRRRV.

This sequence belongs to the universal ribosomal protein uS11 family. As to quaternary structure, part of the 30S ribosomal subunit. Interacts with proteins S7 and S18. Binds to IF-3.

Located on the platform of the 30S subunit, it bridges several disparate RNA helices of the 16S rRNA. Forms part of the Shine-Dalgarno cleft in the 70S ribosome. In Phenylobacterium zucineum (strain HLK1), this protein is Small ribosomal subunit protein uS11.